We begin with the raw amino-acid sequence, 515 residues long: Maturase K (515 aa).

This sequence belongs to the intron maturase 2 family. MatK subfamily.

The protein localises to the plastid. It is found in the chloroplast. Usually encoded in the trnK tRNA gene intron. Probably assists in splicing its own and other chloroplast group II introns. The protein is Maturase K of Pinus attenuata (Knobcone pine).